The sequence spans 184 residues: UPF0215 protein MJ1150 (184 aa).

The protein belongs to the UPF0215 family.

The chain is UPF0215 protein MJ1150 from Methanocaldococcus jannaschii (strain ATCC 43067 / DSM 2661 / JAL-1 / JCM 10045 / NBRC 100440) (Methanococcus jannaschii).